The sequence spans 96 residues: UPF0235 protein CAB243 (96 aa).

It belongs to the UPF0235 family.

The sequence is that of UPF0235 protein CAB243 from Chlamydia abortus (strain DSM 27085 / S26/3) (Chlamydophila abortus).